A 193-amino-acid chain; its full sequence is Holliday junction branch migration complex subunit RuvA (193 aa).

Residues 1-64 (MIGRIQGTLV…EDAQQLFGFA (64 aa)) are domain I. A domain II region spans residues 65 to 139 (TETEREAFRQ…GKLAPDLGVA (75 aa)). A flexible linker region spans residues 139 to 143 (AGGKP). Residues 144–193 (QAIETSSEVLQALLALGYSEKEALLALKQIPADTSISDGIRMGLKYLSKA) are domain III.

The protein belongs to the RuvA family. Homotetramer. Forms an RuvA(8)-RuvB(12)-Holliday junction (HJ) complex. HJ DNA is sandwiched between 2 RuvA tetramers; dsDNA enters through RuvA and exits via RuvB. An RuvB hexamer assembles on each DNA strand where it exits the tetramer. Each RuvB hexamer is contacted by two RuvA subunits (via domain III) on 2 adjacent RuvB subunits; this complex drives branch migration. In the full resolvosome a probable DNA-RuvA(4)-RuvB(12)-RuvC(2) complex forms which resolves the HJ.

It localises to the cytoplasm. Its function is as follows. The RuvA-RuvB-RuvC complex processes Holliday junction (HJ) DNA during genetic recombination and DNA repair, while the RuvA-RuvB complex plays an important role in the rescue of blocked DNA replication forks via replication fork reversal (RFR). RuvA specifically binds to HJ cruciform DNA, conferring on it an open structure. The RuvB hexamer acts as an ATP-dependent pump, pulling dsDNA into and through the RuvAB complex. HJ branch migration allows RuvC to scan DNA until it finds its consensus sequence, where it cleaves and resolves the cruciform DNA. The chain is Holliday junction branch migration complex subunit RuvA from Polynucleobacter necessarius subsp. necessarius (strain STIR1).